A 210-amino-acid chain; its full sequence is Proteasome subunit beta (210 aa).

Residues 1–7 constitute a propeptide, removed in mature form; by autocatalysis; that stretch reads MEVLKTG. Thr8 functions as the Nucleophile in the catalytic mechanism.

This sequence belongs to the peptidase T1B family. The 20S proteasome core is composed of 14 alpha and 14 beta subunits that assemble into four stacked heptameric rings, resulting in a barrel-shaped structure. The two inner rings, each composed of seven catalytic beta subunits, are sandwiched by two outer rings, each composed of seven alpha subunits. The catalytic chamber with the active sites is on the inside of the barrel. Has a gated structure, the ends of the cylinder being occluded by the N-termini of the alpha-subunits. Is capped at one or both ends by the proteasome regulatory ATPase, PAN.

It is found in the cytoplasm. The enzyme catalyses Cleavage of peptide bonds with very broad specificity.. With respect to regulation, the formation of the proteasomal ATPase PAN-20S proteasome complex, via the docking of the C-termini of PAN into the intersubunit pockets in the alpha-rings, triggers opening of the gate for substrate entry. Interconversion between the open-gate and close-gate conformations leads to a dynamic regulation of the 20S proteasome proteolysis activity. Its function is as follows. Component of the proteasome core, a large protease complex with broad specificity involved in protein degradation. The chain is Proteasome subunit beta from Picrophilus torridus (strain ATCC 700027 / DSM 9790 / JCM 10055 / NBRC 100828 / KAW 2/3).